The primary structure comprises 250 residues: 5'/3'-nucleotidase SurE (250 aa).

A divalent metal cation is bound by residues aspartate 9, aspartate 10, serine 40, and asparagine 93.

It belongs to the SurE nucleotidase family. Requires a divalent metal cation as cofactor.

Its subcellular location is the cytoplasm. It catalyses the reaction a ribonucleoside 5'-phosphate + H2O = a ribonucleoside + phosphate. It carries out the reaction a ribonucleoside 3'-phosphate + H2O = a ribonucleoside + phosphate. The catalysed reaction is [phosphate](n) + H2O = [phosphate](n-1) + phosphate + H(+). Functionally, nucleotidase with a broad substrate specificity as it can dephosphorylate various ribo- and deoxyribonucleoside 5'-monophosphates and ribonucleoside 3'-monophosphates with highest affinity to 3'-AMP. Also hydrolyzes polyphosphate (exopolyphosphatase activity) with the preference for short-chain-length substrates (P20-25). Might be involved in the regulation of dNTP and NTP pools, and in the turnover of 3'-mononucleotides produced by numerous intracellular RNases (T1, T2, and F) during the degradation of various RNAs. The protein is 5'/3'-nucleotidase SurE of Yersinia enterocolitica serotype O:8 / biotype 1B (strain NCTC 13174 / 8081).